The sequence spans 448 residues: UDP-N-acetylmuramoylalanine--D-glutamate ligase (448 aa).

An ATP-binding site is contributed by 116 to 122; that stretch reads GSNAKST.

This sequence belongs to the MurCDEF family.

The protein resides in the cytoplasm. The enzyme catalyses UDP-N-acetyl-alpha-D-muramoyl-L-alanine + D-glutamate + ATP = UDP-N-acetyl-alpha-D-muramoyl-L-alanyl-D-glutamate + ADP + phosphate + H(+). It participates in cell wall biogenesis; peptidoglycan biosynthesis. Its function is as follows. Cell wall formation. Catalyzes the addition of glutamate to the nucleotide precursor UDP-N-acetylmuramoyl-L-alanine (UMA). The chain is UDP-N-acetylmuramoylalanine--D-glutamate ligase from Pseudomonas fluorescens (strain ATCC BAA-477 / NRRL B-23932 / Pf-5).